Here is a 176-residue protein sequence, read N- to C-terminus: Large ribosomal subunit protein uL6 (176 aa).

This sequence belongs to the universal ribosomal protein uL6 family. In terms of assembly, part of the 50S ribosomal subunit.

This protein binds to the 23S rRNA, and is important in its secondary structure. It is located near the subunit interface in the base of the L7/L12 stalk, and near the tRNA binding site of the peptidyltransferase center. This chain is Large ribosomal subunit protein uL6, found in Methanospirillum hungatei JF-1 (strain ATCC 27890 / DSM 864 / NBRC 100397 / JF-1).